We begin with the raw amino-acid sequence, 346 residues long: Small ribosomal subunit biogenesis GTPase RsgA (346 aa).

The tract at residues 1 to 26 (MAKRKLTQNQTRRIQSNNAKTLHRHK) is disordered. The segment covering 7 to 20 (TQNQTRRIQSNNAK) has biased composition (polar residues). In terms of domain architecture, CP-type G spans 103–271 (ENEISRPDYY…LIDSPGIREF (169 aa)). GTP-binding positions include 159-162 (NKVD) and 213-221 (GQSGVGKSS). Zn(2+) contacts are provided by C295, C300, H302, and C308.

The protein belongs to the TRAFAC class YlqF/YawG GTPase family. RsgA subfamily. Monomer. Associates with 30S ribosomal subunit, binds 16S rRNA. Zn(2+) serves as cofactor.

The protein resides in the cytoplasm. Functionally, one of several proteins that assist in the late maturation steps of the functional core of the 30S ribosomal subunit. Helps release RbfA from mature subunits. May play a role in the assembly of ribosomal proteins into the subunit. Circularly permuted GTPase that catalyzes slow GTP hydrolysis, GTPase activity is stimulated by the 30S ribosomal subunit. The protein is Small ribosomal subunit biogenesis GTPase RsgA of Haemophilus influenzae (strain PittGG).